Here is a 642-residue protein sequence, read N- to C-terminus: Assimilatory sulfite reductase (ferredoxin), chloroplastic (642 aa).

A chloroplast-targeting transit peptide spans Met-1–Ala-61. The disordered stretch occupies residues Pro-46–Arg-74. Residues Cys-503, Cys-509, Cys-549, and Cys-553 each coordinate [4Fe-4S] cluster. Residue Cys-553 coordinates siroheme.

Belongs to the nitrite and sulfite reductase 4Fe-4S domain family. Monomer. Interacts with ferredoxin. Requires siroheme as cofactor. [4Fe-4S] cluster serves as cofactor. In terms of processing, phosphorylated; this phosphorylation reduces DNA-binding. Present in leaves and roots.

Its subcellular location is the plastid. It localises to the chloroplast stroma. The protein resides in the chloroplast nucleoid. The protein localises to the plastid stroma. It carries out the reaction hydrogen sulfide + 6 oxidized [2Fe-2S]-[ferredoxin] + 3 H2O = sulfite + 6 reduced [2Fe-2S]-[ferredoxin] + 7 H(+). Functionally, essential protein with sulfite reductase activity required in assimilatory sulfate reduction pathway during both primary and secondary metabolism and thus involved in development and growth. In terms of biological role, DNA-binding protein that binds to both double-stranded and single-stranded DNA without significant sequence specificity to reversibly repress the transcriptional activity of chloroplast nucleoids by promoting DNA compaction and possibly regulate DNA replication. This chain is Assimilatory sulfite reductase (ferredoxin), chloroplastic (SIR), found in Arabidopsis thaliana (Mouse-ear cress).